The sequence spans 214 residues: Adenylate kinase (214 aa).

10–15 (GAGKGT) is a binding site for ATP. The segment at 30–59 (STGDMLRAAIKAGTELGKQAKAVIDAGQLV) is NMP. Residues Thr-31, Arg-36, 57 to 59 (QLV), 85 to 88 (GFPR), and Gln-92 contribute to the AMP site. Positions 122-159 (GRRAHLPSGRTYHVVYNPPKVEGKDDVTGEDLVVRDDD) are LID. ATP is bound by residues Arg-123 and 132 to 133 (TY). Arg-156 and Arg-167 together coordinate AMP. An ATP-binding site is contributed by Lys-200.

The protein belongs to the adenylate kinase family. As to quaternary structure, monomer.

The protein localises to the cytoplasm. The catalysed reaction is AMP + ATP = 2 ADP. It functions in the pathway purine metabolism; AMP biosynthesis via salvage pathway; AMP from ADP: step 1/1. Functionally, catalyzes the reversible transfer of the terminal phosphate group between ATP and AMP. Plays an important role in cellular energy homeostasis and in adenine nucleotide metabolism. In Vibrio vulnificus (strain CMCP6), this protein is Adenylate kinase.